Here is a 244-residue protein sequence, read N- to C-terminus: MTNTDNMSPNFLRNAFRRLTITAIAPIVMTFEPFFIFPVVLITLARRGFVYILLPITAALILRATKVNYGPLTVSPTMHFNTPSIAVFAVLLVATTIASVFKPKLWRAFLVAIVVISILHAATPIESPVKGEGCNKISIELLDSETNFCFYISSAKTGKMWYYHATLHFMDSEGLVVNRVHLLTAALTFSSEVVEFRNEQGKFHAIFYSEVPIDSLKLKLCYFPETVIGSLPVVFCSSVDLEVR.

The next 4 helical transmembrane spans lie at Thr20–Ile42, Phe49–Val67, Thr82–Phe101, and Ala108–Ile125.

The protein localises to the cell membrane. This is an uncharacterized protein from Archaeoglobus fulgidus (strain ATCC 49558 / DSM 4304 / JCM 9628 / NBRC 100126 / VC-16).